The following is an 84-amino-acid chain: ATP synthase subunit c (84 aa).

Transmembrane regions (helical) follow at residues 9-29 (IIGASILLAFAALGTAIGFAI) and 54-74 (IVAGLLDAIAMIAVGISLLFI).

It belongs to the ATPase C chain family. As to quaternary structure, F-type ATPases have 2 components, F(1) - the catalytic core - and F(0) - the membrane proton channel. F(1) has five subunits: alpha(3), beta(3), gamma(1), delta(1), epsilon(1). F(0) has three main subunits: a(1), b(2) and c(10-14). The alpha and beta chains form an alternating ring which encloses part of the gamma chain. F(1) is attached to F(0) by a central stalk formed by the gamma and epsilon chains, while a peripheral stalk is formed by the delta and b chains.

Its subcellular location is the cell inner membrane. F(1)F(0) ATP synthase produces ATP from ADP in the presence of a proton or sodium gradient. F-type ATPases consist of two structural domains, F(1) containing the extramembraneous catalytic core and F(0) containing the membrane proton channel, linked together by a central stalk and a peripheral stalk. During catalysis, ATP synthesis in the catalytic domain of F(1) is coupled via a rotary mechanism of the central stalk subunits to proton translocation. Functionally, key component of the F(0) channel; it plays a direct role in translocation across the membrane. A homomeric c-ring of between 10-14 subunits forms the central stalk rotor element with the F(1) delta and epsilon subunits. The chain is ATP synthase subunit c from Haemophilus influenzae (strain ATCC 51907 / DSM 11121 / KW20 / Rd).